Here is a 163-residue protein sequence, read N- to C-terminus: Phosphopantetheine adenylyltransferase (163 aa).

T10 serves as a coordination point for substrate. ATP contacts are provided by residues 10–11 and H18; that span reads TF. Substrate-binding residues include K42, L74, and R88. ATP contacts are provided by residues 89–91, E99, and 124–130; these read GLR and NSFISST.

It belongs to the bacterial CoaD family. Homohexamer. Mg(2+) is required as a cofactor.

It is found in the cytoplasm. The catalysed reaction is (R)-4'-phosphopantetheine + ATP + H(+) = 3'-dephospho-CoA + diphosphate. Its pathway is cofactor biosynthesis; coenzyme A biosynthesis; CoA from (R)-pantothenate: step 4/5. Reversibly transfers an adenylyl group from ATP to 4'-phosphopantetheine, yielding dephospho-CoA (dPCoA) and pyrophosphate. The protein is Phosphopantetheine adenylyltransferase of Shewanella putrefaciens (strain CN-32 / ATCC BAA-453).